Here is a 265-residue protein sequence, read N- to C-terminus: Deoxycytidine kinase 2 (265 aa).

G31 to T39 provides a ligand contact to ATP. Substrate contacts are provided by E56, Y89, and Q100. E130 serves as the catalytic Proton acceptor. Residues R131 and D136 each coordinate substrate. Residue R191–R195 coordinates ATP. E200 is a binding site for substrate. Residue E243 to F245 participates in ATP binding.

The protein belongs to the DCK/DGK family. In terms of assembly, homodimer. In terms of tissue distribution, expressed at high levels in adult intestine, spleen, thymus and testis with lower levels in skeletal muscle and eye. In the embryo, expressed at higher levels until day 10 with lower levels in later stages.

It is found in the nucleus. It catalyses the reaction 2'-deoxycytidine + a ribonucleoside 5'-triphosphate = dCMP + a ribonucleoside 5'-diphosphate + H(+). It carries out the reaction 2'-deoxyguanosine + ATP = dGMP + ADP + H(+). The enzyme catalyses 2'-deoxyadenosine + ATP = dAMP + ADP + H(+). In terms of biological role, phosphorylates the deoxyribonucleosides deoxyadenosine, deoxycytidine and deoxyguanosine. Shows highest activity against deoxyguanosine followed by deoxycytidine and then deoxyadenosine. Shows only very minor activity against deoxyuridine and deoxythymidine. This chain is Deoxycytidine kinase 2, found in Gallus gallus (Chicken).